The following is a 260-amino-acid chain: MIFKILCSLLLVTSNFASALYVNETTSYTPYTKTLTPTYSVSPQETTLTYSDETTTFYITSTFYSTYWFTTSQSAAIISTPTASTPTASTPSLTTSTNEYTTTYSDTDTTYTSTLTSTYIITLSTESANEKAEQISTSVTEIASTVTESGSTYTSTLTSTLLVTVYNSQASNTIATSTAGDAASNVDALEKLVSAEHQSQMIQTTSADEQYCSASTKYVTVTAAAVTEVVTTTAEPVVKYVTITADASNVTGSANNGTHI.

Residues 1–19 (MIFKILCSLLLVTSNFASA) form the signal peptide. N-linked (GlcNAc...) asparagine glycans are attached at residues Asn23, Asn249, and Asn256.

Its function is as follows. Required for vanadate resistance. The sequence is that of Protein SVS1 (SVS1) from Saccharomyces cerevisiae (strain ATCC 204508 / S288c) (Baker's yeast).